The primary structure comprises 146 residues: Cytochrome b5 type B (146 aa).

Positions 1 to 11 (MATPEASGSGR) are excised as a propeptide. The region spanning 20–96 (VTYYRLEEVA…LKQYYIGDVH (77 aa)) is the Cytochrome b5 heme-binding domain. The residue at position 30 (Lys30) is an N6-acetyllysine. Positions 55 and 79 each coordinate heme. Position 80 is a phosphoserine (Ser80). Residues 119-136 (WAYWIVPIVGAILIGFLY) form a helical membrane-spanning segment.

This sequence belongs to the cytochrome b5 family. As to quaternary structure, component of a complex composed of cytochrome b5, NADH-cytochrome b5 reductase (CYB5R3) and MTARC2.

It is found in the mitochondrion outer membrane. In terms of biological role, cytochrome b5 is a membrane-bound hemoprotein functioning as an electron carrier for several membrane-bound oxygenases. The sequence is that of Cytochrome b5 type B (Cyb5b) from Rattus norvegicus (Rat).